The primary structure comprises 46 residues: Esculentin-1A (46 aa).

A disulfide bond links Cys40 and Cys46.

It belongs to the frog skin active peptide (FSAP) family. Brevinin subfamily. Expressed by the skin glands.

It is found in the secreted. Its function is as follows. Shows antibacterial activity against representative Gram-negative and Gram-positive bacterial species, and hemolytic activity. The sequence is that of Esculentin-1A from Pelophylax lessonae (Pool frog).